We begin with the raw amino-acid sequence, 219 residues long: Probable GTP-binding protein EngB (219 aa).

The 178-residue stretch at 42 to 219 (SVPEIAFAGR…RTAVLEAVEL (178 aa)) folds into the EngB-type G domain. GTP contacts are provided by residues 50-57 (GRSNVGKS), 77-81 (GRTQE), 97-100 (DMPG), 164-167 (TKAD), and 198-200 (TSS). Serine 57 and threonine 79 together coordinate Mg(2+).

This sequence belongs to the TRAFAC class TrmE-Era-EngA-EngB-Septin-like GTPase superfamily. EngB GTPase family. The cofactor is Mg(2+).

Functionally, necessary for normal cell division and for the maintenance of normal septation. This is Probable GTP-binding protein EngB from Sphingopyxis alaskensis (strain DSM 13593 / LMG 18877 / RB2256) (Sphingomonas alaskensis).